The chain runs to 546 residues: Glucose-6-phosphate isomerase (546 aa).

Catalysis depends on glutamate 353, which acts as the Proton donor. Active-site residues include histidine 384 and lysine 512.

The protein belongs to the GPI family.

The protein localises to the cytoplasm. It carries out the reaction alpha-D-glucose 6-phosphate = beta-D-fructose 6-phosphate. It participates in carbohydrate biosynthesis; gluconeogenesis. Its pathway is carbohydrate degradation; glycolysis; D-glyceraldehyde 3-phosphate and glycerone phosphate from D-glucose: step 2/4. Catalyzes the reversible isomerization of glucose-6-phosphate to fructose-6-phosphate. In Actinobacillus pleuropneumoniae serotype 3 (strain JL03), this protein is Glucose-6-phosphate isomerase.